The sequence spans 354 residues: Pyruvate dehydrogenase E1 component subunit alpha (354 aa).

The disordered stretch occupies residues 1 to 29; that stretch reads MAKATQDSNRPHKADVGSAIPNHDLPPIP.

In terms of assembly, heterodimer of an alpha and a beta chain. The cofactor is thiamine diphosphate.

The catalysed reaction is N(6)-[(R)-lipoyl]-L-lysyl-[protein] + pyruvate + H(+) = N(6)-[(R)-S(8)-acetyldihydrolipoyl]-L-lysyl-[protein] + CO2. The pyruvate dehydrogenase complex catalyzes the overall conversion of pyruvate to acetyl-CoA and CO(2). It contains multiple copies of three enzymatic components: pyruvate dehydrogenase (E1), dihydrolipoamide acetyltransferase (E2) and lipoamide dehydrogenase (E3). This is Pyruvate dehydrogenase E1 component subunit alpha (pdhA) from Zymomonas mobilis subsp. mobilis (strain ATCC 31821 / ZM4 / CP4).